A 421-amino-acid polypeptide reads, in one-letter code: Medium-chain specific acyl-CoA dehydrogenase, mitochondrial (421 aa).

Residues 1–25 (MAAALRRGYKVLRSVSHFECRAQHT) constitute a mitochondrion transit peptide. Lysine 69 is modified (N6-acetyllysine; alternate). Residue lysine 69 is modified to N6-succinyllysine; alternate. The residue at position 79 (lysine 79) is an N6-acetyllysine. Residue 158-167 (YCVTEPSAGS) coordinates FAD. Serine 167 lines the octanoyl-CoA pocket. Residue lysine 179 is modified to N6-succinyllysine. 191–193 (WIT) is a binding site for FAD. At lysine 212 the chain carries N6-acetyllysine; alternate. N6-succinyllysine; alternate is present on lysine 212. Serine 216 contributes to the octanoyl-CoA binding site. N6-acetyllysine; alternate is present on residues lysine 217, lysine 259, and lysine 271. 3 positions are modified to N6-succinyllysine; alternate: lysine 217, lysine 259, and lysine 271. The octanoyl-CoA site is built by aspartate 278 and arginine 281. At lysine 301 the chain carries N6-acetyllysine. Residues 306–308 (RKT) and 316–317 (HQ) each bind FAD. Arginine 349 and threonine 351 together coordinate octanoyl-CoA. Threonine 351 carries the post-translational modification Phosphothreonine. Residue 374-378 (QIFGG) coordinates FAD. Glutamate 401 is an octanoyl-CoA binding site. The active-site Proton acceptor is the glutamate 401. Residue 402 to 405 (GTAQ) participates in FAD binding.

It belongs to the acyl-CoA dehydrogenase family. Homotetramer. Interacts with the heterodimeric electron transfer flavoprotein ETF. The cofactor is FAD. Post-translationally, acetylated. Could occur at proximity of the cofactor-binding sites and reduce the catalytic activity. Could be deacetylated by SIRT3.

The protein localises to the mitochondrion matrix. It catalyses the reaction a medium-chain 2,3-saturated fatty acyl-CoA + oxidized [electron-transfer flavoprotein] + H(+) = a medium-chain (2E)-enoyl-CoA + reduced [electron-transfer flavoprotein]. The catalysed reaction is pentanoyl-CoA + oxidized [electron-transfer flavoprotein] + H(+) = (2E)-pentenoyl-CoA + reduced [electron-transfer flavoprotein]. The enzyme catalyses hexanoyl-CoA + oxidized [electron-transfer flavoprotein] + H(+) = (2E)-hexenoyl-CoA + reduced [electron-transfer flavoprotein]. It carries out the reaction octanoyl-CoA + oxidized [electron-transfer flavoprotein] + H(+) = (2E)-octenoyl-CoA + reduced [electron-transfer flavoprotein]. It catalyses the reaction decanoyl-CoA + oxidized [electron-transfer flavoprotein] + H(+) = (2E)-decenoyl-CoA + reduced [electron-transfer flavoprotein]. The catalysed reaction is dodecanoyl-CoA + oxidized [electron-transfer flavoprotein] + H(+) = (2E)-dodecenoyl-CoA + reduced [electron-transfer flavoprotein]. The enzyme catalyses tetradecanoyl-CoA + oxidized [electron-transfer flavoprotein] + H(+) = (2E)-tetradecenoyl-CoA + reduced [electron-transfer flavoprotein]. It carries out the reaction oxidized [electron-transfer flavoprotein] + hexadecanoyl-CoA + H(+) = (2E)-hexadecenoyl-CoA + reduced [electron-transfer flavoprotein]. The protein operates within lipid metabolism; mitochondrial fatty acid beta-oxidation. In terms of biological role, medium-chain specific acyl-CoA dehydrogenase is one of the acyl-CoA dehydrogenases that catalyze the first step of mitochondrial fatty acid beta-oxidation, an aerobic process breaking down fatty acids into acetyl-CoA and allowing the production of energy from fats. The first step of fatty acid beta-oxidation consists in the removal of one hydrogen from C-2 and C-3 of the straight-chain fatty acyl-CoA thioester, resulting in the formation of trans-2-enoyl-CoA. Electron transfer flavoprotein (ETF) is the electron acceptor that transfers electrons to the main mitochondrial respiratory chain via ETF-ubiquinone oxidoreductase (ETF dehydrogenase). Among the different mitochondrial acyl-CoA dehydrogenases, medium-chain specific acyl-CoA dehydrogenase acts specifically on acyl-CoAs with saturated 6 to 12 carbons long primary chains. This Rattus norvegicus (Rat) protein is Medium-chain specific acyl-CoA dehydrogenase, mitochondrial.